The sequence spans 408 residues: G2/mitotic-specific cyclin-B (408 aa).

It belongs to the cyclin family. Cyclin AB subfamily. In terms of assembly, interacts with the CDC2 protein kinase to form a serine/threonine kinase holoenzyme complex also known as maturation promoting factor (MPF). The cyclin subunit imparts substrate specificity to the complex.

Essential for the control of the cell cycle at the G2/M (mitosis) transition. The chain is G2/mitotic-specific cyclin-B from Patella vulgata (Common limpet).